The chain runs to 255 residues: Hemin import ATP-binding protein HmuV (255 aa).

The ABC transporter domain maps to 2–238; that stretch reads LRVENLHVRR…EPLKAVFGLE (237 aa). 34 to 41 contacts ATP; that stretch reads GPNGAGKS.

The protein belongs to the ABC transporter superfamily. Heme (hemin) importer (TC 3.A.1.14.5) family. As to quaternary structure, the complex is composed of two ATP-binding proteins (HmuV), two transmembrane proteins (HmuU) and a solute-binding protein (HmuT).

It localises to the cell inner membrane. In terms of biological role, part of the ABC transporter complex HmuTUV involved in hemin import. Responsible for energy coupling to the transport system. This Pseudomonas fluorescens (strain ATCC BAA-477 / NRRL B-23932 / Pf-5) protein is Hemin import ATP-binding protein HmuV.